A 281-amino-acid polypeptide reads, in one-letter code: Mad-like protein 1 (281 aa).

The segment covering 71–80 has biased composition (low complexity); it reads SCASNASTSS. A disordered region spans residues 71–105; that stretch reads SCASNASTSSQPYCSSPPARKSSKHSRTAHNELEK. The tract at residues 95–108 is basic motif; sequence HSRTAHNELEKTRR. A bHLH domain is found at 95–147; that stretch reads HSRTAHNELEKTRRANLRGCLETLKMLVPCVSDATRNTTLALLTRARDHIIEL. The helix-loop-helix motif stretch occupies residues 109–147; the sequence is ANLRGCLETLKMLVPCVSDATRNTTLALLTRARDHIIEL. Residues 144-185 are a coiled coil; sequence IIELQDSNAAQMKKLNDLRDEQDELVAELAQLQADEEVAQAT. A disordered region spans residues 189–213; it reads CQTLSQSRPESRASSFTSTSSRDSP. The segment covering 200-212 has biased composition (low complexity); the sequence is RASSFTSTSSRDS.

In terms of assembly, forms heterodimer with mxl-1 in the presence and absence of DNA. In terms of processing, ubiquitinated. In terms of tissue distribution, expressed in intestinal cells in adults. Expressed in D-type motor neuron cell bodies.

The protein resides in the nucleus. Transcriptional regulator which binds to the E box motif 5'-CACGTG-3', when in a heterodimeric complex with mxl-1. Involved in the control of lifespan in response to dietary restriction, the decline in protein homeostasis associated with normal aging, germline signaling and may overlap with the insulin-like signaling pathway. Plays a role in autophagy. Involved in promoting infection by the microsporidian pathogen N.parisii, possibly together with transcription factors pha-4 and zip-10. In response to neuronal injury, mdl-1 is targeted by sdz-33 for ubiquitin-mediated degradation, probably thereby reducing levels of mdl-1-mxl-1 heterodimers, allowing free mxl-1 to form complexes with tdpt-1 and thus inhibiting tdpt-1-dependent sumoylation of ets-4. The chain is Mad-like protein 1 from Caenorhabditis elegans.